We begin with the raw amino-acid sequence, 25 residues long: Caerin-2.2 (25 aa).

Belongs to the frog skin active peptide (FSAP) family. Caerin subfamily. Expressed by the skin parotoid and/or rostral glands.

The protein resides in the secreted. Antimicrobial peptide, that adopts an alpha helical conformation which can disrupt bacterial membranes. Each caerin displays a different antimicrobial specificity. The chain is Caerin-2.2 from Ranoidea caerulea (Green tree frog).